Here is a 273-residue protein sequence, read N- to C-terminus: 2,3,4,5-tetrahydropyridine-2,6-dicarboxylate N-succinyltransferase (273 aa).

Residues Arg-104 and Asp-141 each coordinate substrate.

Belongs to the transferase hexapeptide repeat family. Homotrimer.

The protein resides in the cytoplasm. The catalysed reaction is (S)-2,3,4,5-tetrahydrodipicolinate + succinyl-CoA + H2O = (S)-2-succinylamino-6-oxoheptanedioate + CoA. It participates in amino-acid biosynthesis; L-lysine biosynthesis via DAP pathway; LL-2,6-diaminopimelate from (S)-tetrahydrodipicolinate (succinylase route): step 1/3. The sequence is that of 2,3,4,5-tetrahydropyridine-2,6-dicarboxylate N-succinyltransferase from Laribacter hongkongensis (strain HLHK9).